A 390-amino-acid polypeptide reads, in one-letter code: Protein STRICTOSIDINE SYNTHASE-LIKE 3 (390 aa).

Residues Met1 to Ser25 form the signal peptide. N-linked (GlcNAc...) asparagine glycans are attached at residues Asn95 and Asn108.

It belongs to the strictosidine synthase family.

The protein resides in the vacuole. The chain is Protein STRICTOSIDINE SYNTHASE-LIKE 3 from Arabidopsis thaliana (Mouse-ear cress).